Reading from the N-terminus, the 147-residue chain is Phosphoribosyl-AMP cyclohydrolase (147 aa).

A Mg(2+)-binding site is contributed by Asp-91. Cys-92 contributes to the Zn(2+) binding site. Mg(2+)-binding residues include Asp-93 and Asp-95. Residues Cys-109 and Cys-116 each coordinate Zn(2+).

Belongs to the PRA-CH family. Homodimer. Mg(2+) serves as cofactor. Zn(2+) is required as a cofactor.

The protein localises to the cytoplasm. It catalyses the reaction 1-(5-phospho-beta-D-ribosyl)-5'-AMP + H2O = 1-(5-phospho-beta-D-ribosyl)-5-[(5-phospho-beta-D-ribosylamino)methylideneamino]imidazole-4-carboxamide. Its pathway is amino-acid biosynthesis; L-histidine biosynthesis; L-histidine from 5-phospho-alpha-D-ribose 1-diphosphate: step 3/9. In terms of biological role, catalyzes the hydrolysis of the adenine ring of phosphoribosyl-AMP. This chain is Phosphoribosyl-AMP cyclohydrolase, found in Rhodopseudomonas palustris (strain BisA53).